A 173-amino-acid chain; its full sequence is Ribosome maturation factor RimM (173 aa).

The 75-residue stretch at 94-168 folds into the PRC barrel domain; it reads SNESYLCDLL…LIRINPPKGL (75 aa).

Belongs to the RimM family. In terms of assembly, binds ribosomal protein uS19.

The protein localises to the cytoplasm. An accessory protein needed during the final step in the assembly of 30S ribosomal subunit, possibly for assembly of the head region. Essential for efficient processing of 16S rRNA. May be needed both before and after RbfA during the maturation of 16S rRNA. It has affinity for free ribosomal 30S subunits but not for 70S ribosomes. The sequence is that of Ribosome maturation factor RimM from Lawsonia intracellularis (strain PHE/MN1-00).